The following is a 607-amino-acid chain: uncharacterized protein (607 aa).

Disordered regions lie at residues 28 to 114 (GAER…KLRR) and 142 to 188 (DQER…NNSS). Positions 35-50 (SSHGSINSRSASPNKA) are enriched in polar residues. Composition is skewed to basic and acidic residues over residues 90–102 (VNGEGAEKGDHDT) and 161–174 (KENKSLKTTAKDLS). The segment covering 177–188 (SSSSMKKANNSS) has biased composition (low complexity). PHD-type zinc fingers lie at residues 263-312 (NDYC…CKHH) and 406-459 (PILC…HSDH).

This is an uncharacterized protein from Schizosaccharomyces pombe (strain 972 / ATCC 24843) (Fission yeast).